We begin with the raw amino-acid sequence, 342 residues long: Protein FinQ (342 aa).

Positions 208–227 (RDREFNLLNAQISMVLYICS) form a DNA-binding region, H-T-H motif.

Functionally, transcriptional inhibitor of the F plasmid transfer genes. FinQ may regulate a gene or genes encoded on the IncI plasmids, and coincidentally may inhibit F transfer when coresident. In Escherichia coli, this protein is Protein FinQ (finQ).